The sequence spans 188 residues: dCTP deaminase (188 aa).

Residues 111–116 (KSTYAR), 135–137 (TLE), Gln156, Tyr170, and Gln180 each bind dCTP. Glu137 serves as the catalytic Proton donor/acceptor.

Belongs to the dCTP deaminase family. Homotrimer.

It catalyses the reaction dCTP + H2O + H(+) = dUTP + NH4(+). It participates in pyrimidine metabolism; dUMP biosynthesis; dUMP from dCTP (dUTP route): step 1/2. Catalyzes the deamination of dCTP to dUTP. This chain is dCTP deaminase, found in Thioalkalivibrio sulfidiphilus (strain HL-EbGR7).